A 668-amino-acid chain; its full sequence is Break repair meiotic recombinase recruitment factor 1 (668 aa).

Disordered stretches follow at residues 1-142 (MTKR…AQSP), 155-333 (LQEA…GCSS), 349-465 (LEER…GGQN), 482-521 (VLEHREIADDPLQEPGAQQGIPDTTSELAGQRDHLPHSAD), and 642-668 (LGGKAPLPYPSKGPGNIPRGDPPWREL). Residues 114–125 (TRKEEMKDEDRG) are compositionally biased toward basic and acidic residues. Residues 166-180 (QADSARPEQSSQSPV) show a composition bias toward polar residues. Positions 208 to 251 (SQDHLSEQGADDSKPETDRVPGDGGQKEHLPSIDSEGEKPDRGA) are enriched in basic and acidic residues. A compositionally biased stretch (low complexity) spans 279–296 (TPASAPTSGPAPGLGPAS). Residues 305–316 (AQGSPDPQQTPS) show a composition bias toward polar residues. A Phosphoserine modification is found at S370. Low complexity predominate over residues 391 to 400 (TGETTGESGE).

Interacts with HSF2BP (via N-terminus) and BRCA2; the interaction with HSF2BP is direct and allows the formation of a ternary complex. The complex BRME1:HSF2BP:BRCA2 interacts with SPATA22, MEIOB and RAD51.

The protein resides in the chromosome. In terms of biological role, meiotic recombination factor component of recombination bridges involved in meiotic double-strand break repair. Modulates the localization of recombinases DMC1:RAD51 to meiotic double-strand break (DSB) sites through the interaction with and stabilization of the BRCA2:HSF2BP complex during meiotic recombination. Indispensable for the DSB repair, homologous synapsis, and crossover formation that are needed for progression past metaphase I, is essential for spermatogenesis and male fertility. The sequence is that of Break repair meiotic recombinase recruitment factor 1 from Homo sapiens (Human).